Reading from the N-terminus, the 955-residue chain is Probable trehalose monomycolate exporter MmpL3 (955 aa).

The Cytoplasmic segment spans residues 1 to 13 (MFAWWGRTVYRYR). A helical transmembrane segment spans residues 14-34 (FIVIGITVALCLCGGVFGLSL). Residues 35–190 (GKHVTQSGFY…TIATDQRRME (156 aa)) lie on the Periplasmic side of the membrane. 40–44 (QSGFY) contacts a 1,2-diacylglycero-3-phosphoethanolamine. The chain crosses the membrane as a helical span at residues 191 to 213 (VLALPLVAVVLFLVFGGVIAACL). Over 214-219 (PVMVGG) the chain is Cytoplasmic. The helical transmembrane segment at 220–236 (LSIAGALGILRFIALFG) threads the bilayer. Over 237–244 (PVHFFAQP) the chain is Periplasmic. A helical transmembrane segment spans residues 245 to 262 (VVSLIGLGIAVDYGLFVV). The Cytoplasmic portion of the chain corresponds to 263-291 (SRFREEIAEGYDTEAAVRRTVMTAGRTVT). Residues 292–312 (FSAVLIAASGASLLLLPQGFV) traverse the membrane as a helical segment. The Periplasmic segment spans residues 313–319 (KSLTYAL). The chain crosses the membrane as a helical span at residues 320 to 340 (IAAVTLAALLSITLLPACLAI). At 341 to 401 (LAKHVDALGV…KLVNFVMKRP (61 aa)) the chain is on the cytoplasmic side. A helical transmembrane segment spans residues 402–422 (LVFAIPIVIGMILLVIPLGNL). Over 423-567 (SFGGMSEKYL…HSLVAQAPLM (145 aa)) the chain is Periplasmic. The helical transmembrane segment at 568-588 (VIMLITTTMLLMFLAFGSFVL) threads the bilayer. At 589–591 (PIK) the chain is on the cytoplasmic side. A helical transmembrane segment spans residues 592 to 612 (AAVMSALTLGSTMGILTWIFV). Over 613 to 621 (DGHLSKWLN) the chain is Periplasmic. A helical transmembrane segment spans residues 622–642 (FTPTPLMVVIIALVVAVGYGL). Residues 643 to 678 (ATDYEVFLVSRMVEARAESMSTQEAVRIGTASTGRL) lie on the Cytoplasmic side of the membrane. The chain crosses the membrane as a helical span at residues 679 to 699 (ITAAALVLAVVAGSFVFSDLV). The Periplasmic segment spans residues 700–703 (MMKY). Residues 704–724 (LAFGLMAALLLDATVVRMFLV) form a helical membrane-spanning segment. At 725–955 (PSVMKLLGDD…QDLLRREGRL (231 aa)) the chain is on the cytoplasmic side. Positions 759 to 955 (ERRRPTVSGR…QDLLRREGRL (197 aa)) are disordered. Polar residues-rich tracts occupy residues 821 to 860 (GAST…SQGV) and 890 to 902 (NRSS…TAEP).

It belongs to the resistance-nodulation-cell division (RND) (TC 2.A.6) family. MmpL subfamily.

It is found in the cell inner membrane. The protein localises to the cell septum. The protein resides in the cell tip. In terms of biological role, transports trehalose monomycolate (TMM) to the cell wall. Flips TMM across the inner membrane. Membrane potential is not required for this function. Transports probably phosphatidylethanolamine (PE) as well. Contributes to membrane potential, cell wall composition, antibiotic susceptibility and fitness. This chain is Probable trehalose monomycolate exporter MmpL3 (mmpL3), found in Mycobacterium leprae (strain TN).